A 473-amino-acid chain; its full sequence is Glutamyl-tRNA reductase (473 aa).

Substrate contacts are provided by residues 49–52 (TCNR), S109, 114–116 (EQQ), and Q120. Residue C50 is the Nucleophile of the active site. 189 to 194 (GAGSMG) is a binding site for NADP(+). Positions 445-473 (SGLDAGSGPQGADGPSAGPTPSAPNPSAE) are disordered.

The protein belongs to the glutamyl-tRNA reductase family. In terms of assembly, homodimer.

It catalyses the reaction (S)-4-amino-5-oxopentanoate + tRNA(Glu) + NADP(+) = L-glutamyl-tRNA(Glu) + NADPH + H(+). Its pathway is porphyrin-containing compound metabolism; protoporphyrin-IX biosynthesis; 5-aminolevulinate from L-glutamyl-tRNA(Glu): step 1/2. Its function is as follows. Catalyzes the NADPH-dependent reduction of glutamyl-tRNA(Glu) to glutamate 1-semialdehyde (GSA). The sequence is that of Glutamyl-tRNA reductase from Mycobacterium ulcerans (strain Agy99).